The sequence spans 1021 residues: Contactin-1 (1021 aa).

The N-terminal stretch at 1-20 (MKTPLLVSHLLLISLTSCLG) is a signal peptide. 6 consecutive Ig-like C2-type domains span residues 41–131 (PIFE…ATLS), 137–223 (PFPP…KSVF), 241–326 (PADI…ARIY), 331–407 (PEWV…AELK), 413–500 (PTFE…GTLV), and 504–603 (PTRI…LVVR). 2 disulfides stabilise this stretch: cysteine 65/cysteine 114 and cysteine 158/cysteine 211. Residues asparagine 208 and asparagine 258 are each glycosylated (N-linked (GlcNAc...) asparagine). A disulfide bond links cysteine 263 and cysteine 310. The N-linked (GlcNAc...) asparagine glycan is linked to asparagine 338. 2 disulfide bridges follow: cysteine 352–cysteine 391 and cysteine 436–cysteine 484. 4 N-linked (GlcNAc...) asparagine glycosylation sites follow: asparagine 457, asparagine 473, asparagine 494, and asparagine 521. A disulfide bond links cysteine 526 and cysteine 585. N-linked (GlcNAc...) asparagine glycosylation is present at asparagine 593. Fibronectin type-III domains lie at 608 to 706 (PPGG…TDGA), 711 to 808 (APSD…SAQD), 813 to 908 (APTE…APPS), and 909 to 1002 (QPPR…TLSS). The tract at residues 695–719 (SIPSNRIKTDGAAPNVAPSDVGGGG) is disordered. Asparagine 935 is a glycosylation site (N-linked (GlcNAc...) asparagine). The GPI-anchor amidated serine moiety is linked to residue serine 1001. A propeptide spans 1002-1021 (SGLLSLLLPSLGFLVFYSEF) (removed in mature form).

It belongs to the immunoglobulin superfamily. Contactin family. In terms of assembly, monomer. Interacts with NOTCH1. Interacts with CNTNAP1 in cis form and TNR. Binds to the carbonic-anhydrase like domain of PTPRZ1. Detected in a complex with NRCAM and PTPRB. Interacts with TASOR. As to expression, expressed by neurons, oligodendrocytes and their progenitors (at protein level). Myelination regulates the expression being down-regulated when neurons are in contact with Schwann cells.

It is found in the cell membrane. Contactins mediate cell surface interactions during nervous system development. Involved in the formation of paranodal axo-glial junctions in myelinated peripheral nerves and in the signaling between axons and myelinating glial cells via its association with CNTNAP1. Participates in oligodendrocytes generation by acting as a ligand of NOTCH1. Its association with NOTCH1 promotes NOTCH1 activation through the released notch intracellular domain (NICD) and subsequent translocation to the nucleus. Interaction with TNR induces a repulsion of neurons and an inhibition of neurite outgrowth. This is Contactin-1 (Cntn1) from Rattus norvegicus (Rat).